Here is a 251-residue protein sequence, read N- to C-terminus: Triosephosphate isomerase (251 aa).

Residues N10 and K12 each coordinate substrate. The Electrophile role is filled by H96. The Proton acceptor role is filled by E168.

It belongs to the triosephosphate isomerase family. Homodimer.

The catalysed reaction is D-glyceraldehyde 3-phosphate = dihydroxyacetone phosphate. It functions in the pathway carbohydrate biosynthesis; gluconeogenesis. The protein operates within carbohydrate degradation; glycolysis; D-glyceraldehyde 3-phosphate from glycerone phosphate: step 1/1. This Aspergillus oryzae (strain ATCC 42149 / RIB 40) (Yellow koji mold) protein is Triosephosphate isomerase (tpiA).